The primary structure comprises 709 residues: Peptidoglycan D,D-transpeptidase FtsI homolog (709 aa).

Residues 20–42 (LQGIYYAFLSISTMIKIALDPYS) traverse the membrane as a helical segment. Residue S341 is the Acyl-ester intermediate of the active site.

The protein belongs to the transpeptidase family.

The protein localises to the plastid. Its subcellular location is the chloroplast membrane. The enzyme catalyses Preferential cleavage: (Ac)2-L-Lys-D-Ala-|-D-Ala. Also transpeptidation of peptidyl-alanyl moieties that are N-acyl substituents of D-alanine.. In Nephroselmis olivacea (Green alga), this protein is Peptidoglycan D,D-transpeptidase FtsI homolog (ftsI).